Here is a 387-residue protein sequence, read N- to C-terminus: Eukaryotic translation initiation factor 3 subunit M (387 aa).

Residues Leu-181–His-340 enclose the PCI domain.

Belongs to the eIF-3 subunit M family. In terms of assembly, component of the eukaryotic translation initiation factor 3 (eIF-3) complex. The eIF-3 complex interacts with pix.

It localises to the cytoplasm. The protein localises to the golgi apparatus. In terms of biological role, component of the eukaryotic translation initiation factor 3 (eIF-3) complex, which is involved in protein synthesis of a specialized repertoire of mRNAs and, together with other initiation factors, stimulates binding of mRNA and methionyl-tRNAi to the 40S ribosome. The eIF-3 complex specifically targets and initiates translation of a subset of mRNAs involved in cell proliferation. In Drosophila persimilis (Fruit fly), this protein is Eukaryotic translation initiation factor 3 subunit M.